The primary structure comprises 1361 residues: DNA-directed RNA polymerase subunit beta (1361 aa).

The protein belongs to the RNA polymerase beta chain family. The RNAP catalytic core consists of 2 alpha, 1 beta, 1 beta' and 1 omega subunit. When a sigma factor is associated with the core the holoenzyme is formed, which can initiate transcription.

It catalyses the reaction RNA(n) + a ribonucleoside 5'-triphosphate = RNA(n+1) + diphosphate. Functionally, DNA-dependent RNA polymerase catalyzes the transcription of DNA into RNA using the four ribonucleoside triphosphates as substrates. This is DNA-directed RNA polymerase subunit beta from Cellvibrio japonicus (strain Ueda107) (Pseudomonas fluorescens subsp. cellulosa).